The chain runs to 409 residues: F-box protein At3g17320 (409 aa).

Positions 1 to 47 (MTKISDLPRDLAEEVLSRVPVTYLRAIRFTCKKWNTLTKRRSFTKKL) constitute an F-box domain.

This chain is F-box protein At3g17320, found in Arabidopsis thaliana (Mouse-ear cress).